The chain runs to 416 residues: Serine hydroxymethyltransferase (416 aa).

(6S)-5,6,7,8-tetrahydrofolate contacts are provided by residues L118 and G122–L124. K226 carries the post-translational modification N6-(pyridoxal phosphate)lysine. Residues E242 and S350 to F352 contribute to the (6S)-5,6,7,8-tetrahydrofolate site.

This sequence belongs to the SHMT family. Homodimer. Pyridoxal 5'-phosphate serves as cofactor.

The protein resides in the cytoplasm. It catalyses the reaction (6R)-5,10-methylene-5,6,7,8-tetrahydrofolate + glycine + H2O = (6S)-5,6,7,8-tetrahydrofolate + L-serine. The protein operates within one-carbon metabolism; tetrahydrofolate interconversion. Its pathway is amino-acid biosynthesis; glycine biosynthesis; glycine from L-serine: step 1/1. Catalyzes the reversible interconversion of serine and glycine with tetrahydrofolate (THF) serving as the one-carbon carrier. This reaction serves as the major source of one-carbon groups required for the biosynthesis of purines, thymidylate, methionine, and other important biomolecules. Also exhibits THF-independent aldolase activity toward beta-hydroxyamino acids, producing glycine and aldehydes, via a retro-aldol mechanism. This Wolinella succinogenes (strain ATCC 29543 / DSM 1740 / CCUG 13145 / JCM 31913 / LMG 7466 / NCTC 11488 / FDC 602W) (Vibrio succinogenes) protein is Serine hydroxymethyltransferase.